A 180-amino-acid chain; its full sequence is MNNLKAHYQKTIAKELQKSFAFSSIMQVPRLEKIVINMGVGDAIRDSKFLESALNELHLISGQKPVATKAKNAISTYKLRAGQLIGCKVTLRGERMWAFLEKLIYVALPRVRDFRGLSLKSFDGRGNYTIGIKEQIIFPEIVYDDIKRIRGFDVTLVTSTNKDSEALALLRALNLPLVKG.

It belongs to the universal ribosomal protein uL5 family. Part of the 50S ribosomal subunit; part of the 5S rRNA/L5/L18/L25 subcomplex. Contacts the 5S rRNA and the P site tRNA. Forms a bridge to the 30S subunit in the 70S ribosome.

This is one of the proteins that bind and probably mediate the attachment of the 5S RNA into the large ribosomal subunit, where it forms part of the central protuberance. In the 70S ribosome it contacts protein S13 of the 30S subunit (bridge B1b), connecting the 2 subunits; this bridge is implicated in subunit movement. Contacts the P site tRNA; the 5S rRNA and some of its associated proteins might help stabilize positioning of ribosome-bound tRNAs. The sequence is that of Large ribosomal subunit protein uL5 from Mycoplasma pneumoniae (strain ATCC 29342 / M129 / Subtype 1) (Mycoplasmoides pneumoniae).